A 123-amino-acid polypeptide reads, in one-letter code: Small ribosomal subunit protein uS13 (123 aa).

Residues 97 to 123 (PCRGQRTHTNSRTRKGPRRGVMAKKKK) are disordered.

It belongs to the universal ribosomal protein uS13 family. Part of the 30S ribosomal subunit. Forms a loose heterodimer with protein S19. Forms two bridges to the 50S subunit in the 70S ribosome.

Located at the top of the head of the 30S subunit, it contacts several helices of the 16S rRNA. In the 70S ribosome it contacts the 23S rRNA (bridge B1a) and protein L5 of the 50S subunit (bridge B1b), connecting the 2 subunits; these bridges are implicated in subunit movement. Contacts the tRNAs in the A and P-sites. The polypeptide is Small ribosomal subunit protein uS13 (Solidesulfovibrio magneticus (strain ATCC 700980 / DSM 13731 / RS-1) (Desulfovibrio magneticus)).